The chain runs to 553 residues: Putative transport protein YidE (553 aa).

Helical transmembrane passes span 4-24 (IALT…IGNV), 28-48 (GIGL…HFVS), 65-85 (FGLI…FFAS), 95-115 (LFAV…HKLF), and 158-178 (MSYA…MWML). 2 RCK C-terminal domains span residues 191 to 276 (QQHE…VIGQ) and 279 to 361 (DTSL…VLGN). 6 helical membrane passes run 371–391 (MLPV…PVFV), 393–413 (GFPA…ALIL), 439–459 (IVLF…NTLV), 464–484 (LSWI…VGIL), 493–513 (YLTM…LAFA), and 533–553 (LVMF…WSIG).

Belongs to the AAE transporter (TC 2.A.81) family. YidE subfamily.

It localises to the cell membrane. The protein is Putative transport protein YidE of Escherichia coli O7:K1 (strain IAI39 / ExPEC).